A 41-amino-acid chain; its full sequence is Sucrose porin (41 aa).

The signal sequence occupies residues Met-1–Ala-22.

This sequence belongs to the porin LamB (TC 1.B.3) family. As to quaternary structure, homotrimer.

It localises to the cell outer membrane. Functionally, porin for sucrose uptake. In Salmonella thompson, this protein is Sucrose porin (scrY).